A 252-amino-acid polypeptide reads, in one-letter code: Imidazole glycerol phosphate synthase subunit HisF (252 aa).

Active-site residues include aspartate 11 and aspartate 130.

It belongs to the HisA/HisF family. Heterodimer of HisH and HisF.

The protein localises to the cytoplasm. It carries out the reaction 5-[(5-phospho-1-deoxy-D-ribulos-1-ylimino)methylamino]-1-(5-phospho-beta-D-ribosyl)imidazole-4-carboxamide + L-glutamine = D-erythro-1-(imidazol-4-yl)glycerol 3-phosphate + 5-amino-1-(5-phospho-beta-D-ribosyl)imidazole-4-carboxamide + L-glutamate + H(+). Its pathway is amino-acid biosynthesis; L-histidine biosynthesis; L-histidine from 5-phospho-alpha-D-ribose 1-diphosphate: step 5/9. Functionally, IGPS catalyzes the conversion of PRFAR and glutamine to IGP, AICAR and glutamate. The HisF subunit catalyzes the cyclization activity that produces IGP and AICAR from PRFAR using the ammonia provided by the HisH subunit. The chain is Imidazole glycerol phosphate synthase subunit HisF from Lacticaseibacillus casei (strain BL23) (Lactobacillus casei).